The following is a 350-amino-acid chain: tRNA uridine(34) hydroxylase (350 aa).

The 95-residue stretch at 146 to 240 folds into the Rhodanese domain; the sequence is DDPDALFIDM…YARKAREQGL (95 aa). Residue Cys-200 is the Cysteine persulfide intermediate of the active site.

It belongs to the TrhO family.

It carries out the reaction uridine(34) in tRNA + AH2 + O2 = 5-hydroxyuridine(34) in tRNA + A + H2O. Its function is as follows. Catalyzes oxygen-dependent 5-hydroxyuridine (ho5U) modification at position 34 in tRNAs, the first step in 5-carboxymethoxyuridine (cmo5U) biosynthesis. May be part of an alternate pathway, which is able to bypass cmo5U biogenesis in a subset of tRNAs under aerobic conditions. In Escherichia coli (strain SMS-3-5 / SECEC), this protein is tRNA uridine(34) hydroxylase.